Here is a 117-residue protein sequence, read N- to C-terminus: Large ribosomal subunit protein uL18 (117 aa).

The protein belongs to the universal ribosomal protein uL18 family. As to quaternary structure, part of the 50S ribosomal subunit; part of the 5S rRNA/L5/L18/L25 subcomplex. Contacts the 5S and 23S rRNAs.

Its function is as follows. This is one of the proteins that bind and probably mediate the attachment of the 5S RNA into the large ribosomal subunit, where it forms part of the central protuberance. This Neisseria gonorrhoeae (strain ATCC 700825 / FA 1090) protein is Large ribosomal subunit protein uL18.